The sequence spans 2684 residues: Probable polyketide synthase 27 (2684 aa).

One can recognise a Ketosynthase family 3 (KS3) domain in the interval 11–442; sequence CGDVAIIGIG…GSNVCLILSE (432 aa). Active-site for beta-ketoacyl synthase activity residues include Cys-183, His-322, and His-365. The interval 650–683 is acyl/malonyl transferases; it reads GVSADIIVGHSLGEMSSSYSSGMIDFETLCYLIY. Ser-660 serves as the catalytic For acyl/malonyl transferase activity. The N-terminal hotdog fold stretch occupies residues 958 to 1087; the sequence is HEKITSEGPP…GNFSLFKHNS (130 aa). The 319-residue stretch at 958–1276 folds into the PKS/mFAS DH domain; that stretch reads HEKITSEGPP…CTSVSLVNPR (319 aa). Catalysis depends on His-999, which acts as the Proton acceptor; for dehydratase activity. The segment at 1104-1276 is C-terminal hotdog fold; that stretch reads NFTTISKQEF…CTSVSLVNPR (173 aa). Catalysis depends on Asp-1173, which acts as the Proton donor; for dehydratase activity. The disordered stretch occupies residues 1202-1221; sequence IPSSSSSSKDDNDCDSNNNN. The region spanning 2585–2662 is the Carrier domain; the sequence is SDNEFIHSTI…QSIDIIKFGY (78 aa). Ser-2622 is subject to O-(pantetheine 4'-phosphoryl)serine.

The cofactor is pantetheine 4'-phosphate.

Functionally, probable polyketide synthase. The chain is Probable polyketide synthase 27 (pks27) from Dictyostelium discoideum (Social amoeba).